We begin with the raw amino-acid sequence, 203 residues long: Akirin-2 (203 aa).

Phosphoserine is present on residues S18 and S21. Residues 22 to 27 carry the Nuclear localization signal motif; sequence PKRRRC. S57 carries the phosphoserine modification. An SYVS motif motif is present at residues 200–203; the sequence is SYVS.

This sequence belongs to the akirin family. As to quaternary structure, homodimer. Interacts with IPO9; the interaction is direct. Associates (via SYVS motif) with 20S and 26S proteasomes. Interacts with SMARCD1; promoting SWI/SNF complex recruitment. Interacts with NFKBIZ. Interacts with YWHAB. Polyubiquitinated. Polyubiquitination is dependent of UBR5 that extends pre-ubiquitinated AKIRIN2. Widely expressed with the highest expression in peripheral blood leukocytes.

Its subcellular location is the nucleus. The protein resides in the cytoplasm. The protein localises to the membrane. In terms of biological role, molecular adapter that acts as a bridge between a variety of multiprotein complexes, and which is involved in embryonic development, immunity, myogenesis and brain development. Plays a key role in nuclear protein degradation by promoting import of proteasomes into the nucleus: directly binds to fully assembled 20S proteasomes at one end and to nuclear import receptor IPO9 at the other end, bridging them together and mediating the import of pre-assembled proteasome complexes through the nuclear pore. Involved in innate immunity by regulating the production of interleukin-6 (IL6) downstream of Toll-like receptor (TLR): acts by bridging the NF-kappa-B inhibitor NFKBIZ and the SWI/SNF complex, leading to promote induction of IL6. Also involved in adaptive immunity by promoting B-cell activation. Involved in brain development: required for the survival and proliferation of cerebral cortical progenitor cells. Involved in myogenesis: required for skeletal muscle formation and skeletal development, possibly by regulating expression of muscle differentiation factors. Also plays a role in facilitating interdigital tissue regression during limb development. The sequence is that of Akirin-2 from Homo sapiens (Human).